Here is a 95-residue protein sequence, read N- to C-terminus: Aspartyl/glutamyl-tRNA(Asn/Gln) amidotransferase subunit C (95 aa).

This sequence belongs to the GatC family. As to quaternary structure, heterotrimer of A, B and C subunits.

It catalyses the reaction L-glutamyl-tRNA(Gln) + L-glutamine + ATP + H2O = L-glutaminyl-tRNA(Gln) + L-glutamate + ADP + phosphate + H(+). It carries out the reaction L-aspartyl-tRNA(Asn) + L-glutamine + ATP + H2O = L-asparaginyl-tRNA(Asn) + L-glutamate + ADP + phosphate + 2 H(+). Its function is as follows. Allows the formation of correctly charged Asn-tRNA(Asn) or Gln-tRNA(Gln) through the transamidation of misacylated Asp-tRNA(Asn) or Glu-tRNA(Gln) in organisms which lack either or both of asparaginyl-tRNA or glutaminyl-tRNA synthetases. The reaction takes place in the presence of glutamine and ATP through an activated phospho-Asp-tRNA(Asn) or phospho-Glu-tRNA(Gln). In Methylorubrum populi (strain ATCC BAA-705 / NCIMB 13946 / BJ001) (Methylobacterium populi), this protein is Aspartyl/glutamyl-tRNA(Asn/Gln) amidotransferase subunit C.